The sequence spans 352 residues: C-C chemokine receptor type 5 (352 aa).

The Extracellular portion of the chain corresponds to 1-30 (MDYQVSSPTYDIDYYTSEPCQKINVKQIAG). Sulfotyrosine is present on Y3. O-linked (GalNAc...) serine glycosylation is found at S6 and S7. Residues Y10, Y14, and Y15 each carry the sulfotyrosine modification. 2 disulfides stabilise this stretch: C20–C269 and C101–C178. A helical membrane pass occupies residues 31-58 (RLLPPLYSLVFIFGFVGNILVVLILINC). At 59 to 68 (KRLKSMTDIY) the chain is on the cytoplasmic side. Residues 69–89 (LLNLAISDLLFLLTVPFWAHY) form a helical membrane-spanning segment. Residues 90–102 (AAAQWDFGNTMCQ) are Extracellular-facing. The helical transmembrane segment at 103-124 (LLTGLYFIGFFSGIFFIILLTI) threads the bilayer. Topologically, residues 125–141 (DRYLAIVHAVFALKART) are cytoplasmic. A helical transmembrane segment spans residues 142–166 (VTFGVVTSVITWVVAVFASLPGIIF). Over 167–198 (TRSQREGLHYTCSSHFPYSQYQFWKNFQTLKI) the chain is Extracellular. A helical membrane pass occupies residues 199-218 (VILGLVLPLLVMVICYSGIL). Topologically, residues 219–235 (KTLLRCRNEKKRHRAVR) are cytoplasmic. A helical transmembrane segment spans residues 236–260 (LIFTIMIVYFLFWAPYNIVLLLNTF). Residues 261-277 (QEFFGLNNCSSSNRLDQ) lie on the Extracellular side of the membrane. A helical membrane pass occupies residues 278–301 (AMQVTETLGMTHCCINPIIYAFVG). The Cytoplasmic segment spans residues 302 to 352 (EKFRNYLLVFFQKHIAKRFCKCCSIFQQEAPERASSVYTRSTGEQEISVGL). Residues C321, C323, and C324 are each lipidated (S-palmitoyl cysteine). Phosphoserine; by BARK1 is present on residues S336, S337, S342, and S349.

This sequence belongs to the G-protein coupled receptor 1 family. In terms of assembly, interacts with PRAF2. Efficient ligand binding to CCL3/MIP-1alpha and CCL4/MIP-1beta requires sulfation, O-glycosylation and sialic acid modifications. Glycosylation on Ser-6 is required for efficient binding of CCL4. Interacts with GRK2. Interacts with ARRB1 and ARRB2. Interacts with CNIH4. Interacts with S100A4; this interaction stimulates T-lymphocyte chemotaxis. Post-translationally, sulfated on at least 2 of the N-terminal tyrosines. Sulfation is required for efficient binding of the chemokines, CCL3 and CCL4. Palmitoylation in the C-terminal is important for cell surface expression. In terms of processing, phosphorylation on serine residues in the C-terminal is stimulated by binding CC chemokines especially by APO-RANTES. Post-translationally, O-glycosylated, but not N-glycosylated. Ser-6 appears to be the major site even if Ser-7 may be also O-glycosylated. Also sialylated glycans present which contribute to chemokine binding. Thr-16 and Ser-17 may also be glycosylated and, if so, with small moieties such as a T-antigen.

The protein localises to the cell membrane. Its function is as follows. Receptor for a number of inflammatory CC-chemokines including CCL3/MIP-1-alpha, CCL4/MIP-1-beta and RANTES and subsequently transduces a signal by increasing the intracellular calcium ion level. May play a role in the control of granulocytic lineage proliferation or differentiation. Participates in T-lymphocyte migration to the infection site by acting as a chemotactic receptor. In Theropithecus gelada (Gelada baboon), this protein is C-C chemokine receptor type 5 (CCR5).